We begin with the raw amino-acid sequence, 236 residues long: Glucosamine-6-phosphate deaminase (236 aa).

Asp-62 (proton acceptor; for enolization step) is an active-site residue. Residue Asn-128 is the For ring-opening step of the active site. The active-site Proton acceptor; for ring-opening step is the His-130. Glu-135 (for ring-opening step) is an active-site residue.

It belongs to the glucosamine/galactosamine-6-phosphate isomerase family. NagB subfamily.

It carries out the reaction alpha-D-glucosamine 6-phosphate + H2O = beta-D-fructose 6-phosphate + NH4(+). It functions in the pathway amino-sugar metabolism; N-acetylneuraminate degradation; D-fructose 6-phosphate from N-acetylneuraminate: step 5/5. Functionally, catalyzes the reversible isomerization-deamination of glucosamine 6-phosphate (GlcN6P) to form fructose 6-phosphate (Fru6P) and ammonium ion. This chain is Glucosamine-6-phosphate deaminase, found in Pediococcus pentosaceus (strain ATCC 25745 / CCUG 21536 / LMG 10740 / 183-1w).